Reading from the N-terminus, the 214-residue chain is Pyrrolidone-carboxylate peptidase (214 aa).

Residues Glu78, Cys141, and His165 contribute to the active site.

It belongs to the peptidase C15 family. Homotetramer.

It localises to the cytoplasm. The enzyme catalyses Release of an N-terminal pyroglutamyl group from a polypeptide, the second amino acid generally not being Pro.. In terms of biological role, removes 5-oxoproline from various penultimate amino acid residues except L-proline. This Streptococcus pneumoniae (strain 70585) protein is Pyrrolidone-carboxylate peptidase.